The chain runs to 522 residues: BTB/POZ domain-containing protein 3 (522 aa).

One can recognise a BTB domain in the interval 120–190 (ADVHFVVGPP…IYCDEIDLAA (71 aa)). In terms of domain architecture, BACK spans 235–300 (FEEPDLTQRC…NWAEVECQRQ (66 aa)).

As to expression, strongly expressed in the primary visual cortex.

The protein resides in the cytoplasm. It is found in the cytosol. Its subcellular location is the nucleus. Acts as a key regulator of dendritic field orientation during development of sensory cortex. Also directs dendrites toward active axon terminals when ectopically expressed. In Callithrix jacchus (White-tufted-ear marmoset), this protein is BTB/POZ domain-containing protein 3 (BTBD3).